A 177-amino-acid chain; its full sequence is ATP synthase subunit delta (177 aa).

It belongs to the ATPase delta chain family. As to quaternary structure, F-type ATPases have 2 components, F(1) - the catalytic core - and F(0) - the membrane proton channel. F(1) has five subunits: alpha(3), beta(3), gamma(1), delta(1), epsilon(1). F(0) has three main subunits: a(1), b(2) and c(10-14). The alpha and beta chains form an alternating ring which encloses part of the gamma chain. F(1) is attached to F(0) by a central stalk formed by the gamma and epsilon chains, while a peripheral stalk is formed by the delta and b chains.

It localises to the cell membrane. F(1)F(0) ATP synthase produces ATP from ADP in the presence of a proton or sodium gradient. F-type ATPases consist of two structural domains, F(1) containing the extramembraneous catalytic core and F(0) containing the membrane proton channel, linked together by a central stalk and a peripheral stalk. During catalysis, ATP synthesis in the catalytic domain of F(1) is coupled via a rotary mechanism of the central stalk subunits to proton translocation. In terms of biological role, this protein is part of the stalk that links CF(0) to CF(1). It either transmits conformational changes from CF(0) to CF(1) or is implicated in proton conduction. This chain is ATP synthase subunit delta, found in Buchnera aphidicola subsp. Acyrthosiphon pisum (strain APS) (Acyrthosiphon pisum symbiotic bacterium).